The chain runs to 494 residues: Maintenance of mitochondrial morphology protein 1 (494 aa).

The Lumenal portion of the chain corresponds to 1 to 25 (MGDDQSLRSTVAENDISANLSFTQG). Residues 26–46 (FLLGQLSVVLLIGAFIKFFIF) form a helical membrane-spanning segment. Residues 47-494 (GEAPPPPSRG…GTLPGGAAAN (448 aa)) lie on the Cytoplasmic side of the membrane. 3 disordered regions span residues 53 to 99 (PSRG…VPSS), 278 to 330 (PPLH…KSNV), and 395 to 494 (RTGV…AAAN). Over residues 57 to 67 (LSHRASTHRRS) the composition is skewed to basic residues. Composition is skewed to polar residues over residues 68–81 (NSIYTINPNEGTSR) and 88–99 (STSNVLRPVPSS). Positions 134–387 (QPESLDWFNV…EPRVQVVGLP (254 aa)) constitute an SMP-LTD domain. Residues 278 to 290 (PPLHTPSPSPSPP) show a composition bias toward pro residues. Polar residues-rich tracts occupy residues 300 to 318 (THPTNGSREPTQEAPNAQE) and 406 to 415 (TGSNAASRSA). Basic and acidic residues predominate over residues 425 to 437 (RADDIGREPDGLR).

It belongs to the MMM1 family. Homodimer. Component of the ER-mitochondria encounter structure (ERMES) or MDM complex, composed of mmm1, mdm10, mdm12 and mdm34. A mmm1 homodimer associates with one molecule of mdm12 on each side in a pairwise head-to-tail manner, and the SMP-LTD domains of mmm1 and mdm12 generate a continuous hydrophobic tunnel for phospholipid trafficking.

Its subcellular location is the endoplasmic reticulum membrane. Component of the ERMES/MDM complex, which serves as a molecular tether to connect the endoplasmic reticulum (ER) and mitochondria. Components of this complex are involved in the control of mitochondrial shape and protein biogenesis, and function in nonvesicular lipid trafficking between the ER and mitochondria. The mdm12-mmm1 subcomplex functions in the major beta-barrel assembly pathway that is responsible for biogenesis of all outer membrane beta-barrel proteins, and acts in a late step after the SAM complex. The mdm10-mdm12-mmm1 subcomplex further acts in the TOM40-specific pathway after the action of the mdm12-mmm1 complex. Essential for establishing and maintaining the structure of mitochondria and maintenance of mtDNA nucleoids. This Aspergillus oryzae (strain ATCC 42149 / RIB 40) (Yellow koji mold) protein is Maintenance of mitochondrial morphology protein 1.